The chain runs to 807 residues: Glycerol-3-phosphate acyltransferase (807 aa).

Residues 308-313 (CHRSHM) carry the HXXXXD motif motif.

The protein belongs to the GPAT/DAPAT family.

The protein localises to the cell inner membrane. It catalyses the reaction sn-glycerol 3-phosphate + an acyl-CoA = a 1-acyl-sn-glycero-3-phosphate + CoA. It participates in phospholipid metabolism; CDP-diacylglycerol biosynthesis; CDP-diacylglycerol from sn-glycerol 3-phosphate: step 1/3. The sequence is that of Glycerol-3-phosphate acyltransferase from Shewanella amazonensis (strain ATCC BAA-1098 / SB2B).